A 522-amino-acid chain; its full sequence is Putative thymidine phosphorylase (522 aa).

Belongs to the thymidine/pyrimidine-nucleoside phosphorylase family. Type 2 subfamily.

It catalyses the reaction thymidine + phosphate = 2-deoxy-alpha-D-ribose 1-phosphate + thymine. The sequence is that of Putative thymidine phosphorylase from Albidiferax ferrireducens (strain ATCC BAA-621 / DSM 15236 / T118) (Rhodoferax ferrireducens).